An 88-amino-acid polypeptide reads, in one-letter code: Small ribosomal subunit protein bS20 (88 aa).

The tract at residues 1-21 (MANTTSAKKATRKIARRTAVN) is disordered.

This sequence belongs to the bacterial ribosomal protein bS20 family.

In terms of biological role, binds directly to 16S ribosomal RNA. This chain is Small ribosomal subunit protein bS20, found in Sinorhizobium fredii (strain NBRC 101917 / NGR234).